Here is a 122-residue protein sequence, read N- to C-terminus: MARIAGIDLPRNKRIEIALTYIYGIGRSTSQKILAEAGVDANTRSDNLTESEVAKIRENIDKNVKVEGDLRRDISMNIKRLMDLGCYRGLRHRKGLPVHGQRTKTNARTRKGPARTVAGKKK.

Residues 96–122 (LPVHGQRTKTNARTRKGPARTVAGKKK) are disordered.

Belongs to the universal ribosomal protein uS13 family. As to quaternary structure, part of the 30S ribosomal subunit. Forms a loose heterodimer with protein S19. Forms two bridges to the 50S subunit in the 70S ribosome.

Its function is as follows. Located at the top of the head of the 30S subunit, it contacts several helices of the 16S rRNA. In the 70S ribosome it contacts the 23S rRNA (bridge B1a) and protein L5 of the 50S subunit (bridge B1b), connecting the 2 subunits; these bridges are implicated in subunit movement. Contacts the tRNAs in the A and P-sites. This Geotalea daltonii (strain DSM 22248 / JCM 15807 / FRC-32) (Geobacter daltonii) protein is Small ribosomal subunit protein uS13.